A 143-amino-acid chain; its full sequence is MGAIVLVALMALVASSSAFSDIEHNIMKLEGENIISSSSTPNDDQSSFSDGTSDMVESLFLNSGNRNLVLMMLSGRPQPNGRCIGDAQPCGFLVSDKGCCDPNYCSEYSKGKCICVPKGQPCGLLHFCCLDLTCDGYFNGTCK.

The N-terminal stretch at 1 to 18 is a signal peptide; it reads MGAIVLVALMALVASSSA. Positions 19-80 are excised as a propeptide; that stretch reads FSDIEHNIMK…MMLSGRPQPN (62 aa). 6 disulfides stabilise this stretch: Cys-83-Cys-100, Cys-90-Cys-105, Cys-99-Cys-113, Cys-115-Cys-129, Cys-122-Cys-134, and Cys-128-Cys-142.

It belongs to the urticatoxin-2 family. As to expression, expressed in trichomes, that are stiff epidermal hairs located on the surface of petioles and leaves.

The protein localises to the secreted. Functionally, plant defense neurotoxin that causes pain and systemic symptoms in mammals via modulation of voltage-gated sodium channels (Nav). Potent modulator of human Nav1.5/SCN5A (EC(50)=55 nM), Nav1.6/SCN8A (EC(50)=0.86 nM), and Nav1.7/SCN9A (EC(50)=208 nM), where it shifts the activation threshold to more negative potentials and delays fast inactivation. Also shifts the voltage-dependence of steady-state fast inactivation of Nav1.6/SCN8A, but not that of Nav1.5/SCN5A or Nav1.7/SCN9A. On Nav1.7/SCN9A, principally acts by binding to extracellular loops of domain IV (Nav site 3). Does not affect current response of the tetrodotoxin (TTX)-resistant Nav1.8/SCN10A sodium channel. In vivo, intraplantar injection into mice causes numerous dose-dependent, immediate, and long-lasting spontaneous pain behaviors, while no swelling is observed in the injected paw. At the highest doses tested, systemic symptoms including hypokinesia and hypersalivation are observed. The protein is Beta/delta-urticatoxin-Uf2a of Urtica ferox (Tree nettle).